A 402-amino-acid chain; its full sequence is UPF0597 protein THA_1286 (402 aa).

The protein belongs to the UPF0597 family.

In Thermosipho africanus (strain TCF52B), this protein is UPF0597 protein THA_1286.